A 674-amino-acid chain; its full sequence is Kelch repeat and BTB domain-containing protein 6 (674 aa).

Residues 1–28 are disordered; it reads MQSREDAPRSRRLASPRGGKRPKKIHKP. The segment covering 10 to 27 has biased composition (basic residues); it reads SRRLASPRGGKRPKKIHK. In terms of domain architecture, BTB spans 63–138; the sequence is CDVTIEVVTP…CYTGRVSLSE (76 aa). Kelch repeat units follow at residues 386–435, 436–484, 486–523, 524–564, 567–616, and 642–673; these read AVCI…YLNG, YIYI…VIRD, LYALNSKRMFCYDPSHNMWLKCVSLKRNDFQEACVFNE, EIYC…IIKH, KLLL…CLSA, and TEWDLGGFSEPDSESGSSSSLSDDDFWVRVAP. The segment at 631-674 is disordered; the sequence is TEEEEIPSESSTEWDLGGFSEPDSESGSSSSLSDDDFWVRVAPQ. Residues 668 to 671 carry the ATG8 interaction motif (AIM) motif; that stretch reads WVRV.

In terms of assembly, core component of a BCR3 (BTB-CUL3-RBX1) E3 ubiquitin ligase complex, also named Cul3-RING ubiquitin ligase complex CUL3(KBTBD6/7), composed of CUL3, RBX1, KBTBD6 and KBTBD7. Interacts with GABARAP; the interaction is direct and is required for the ubiquitination of TIAM1. Interacts with GABARAPL1, GABARAPL2 and MAP1LC3B; the interaction is direct.

It localises to the cytoplasm. Its subcellular location is the nucleus. It participates in protein modification; protein ubiquitination. Its function is as follows. As part of the CUL3(KBTBD6/7) E3 ubiquitin ligase complex functions as a substrate adapter for the RAC1 guanine exchange factor (GEF) TIAM1, mediating its 'Lys-48' ubiquitination and proteasomal degradation. By controlling this ubiquitination, regulates RAC1 signal transduction and downstream biological processes including the organization of the cytoskeleton, cell migration and cell proliferation. Ubiquitination of TIAM1 requires the membrane-associated protein GABARAP which may restrict locally the activity of the complex. The protein is Kelch repeat and BTB domain-containing protein 6 of Homo sapiens (Human).